The chain runs to 298 residues: Ethanolamine ammonia-lyase small subunit (298 aa).

Residues Val-210, Glu-231, and Cys-261 each contribute to the adenosylcob(III)alamin site.

The protein belongs to the EutC family. In terms of assembly, the basic unit is a heterodimer which dimerizes to form tetramers. The heterotetramers trimerize; 6 large subunits form a core ring with 6 small subunits projecting outwards. Adenosylcob(III)alamin serves as cofactor.

It is found in the bacterial microcompartment. The catalysed reaction is ethanolamine = acetaldehyde + NH4(+). The protein operates within amine and polyamine degradation; ethanolamine degradation. Catalyzes the deamination of various vicinal amino-alcohols to oxo compounds. Allows this organism to utilize ethanolamine as the sole source of nitrogen and carbon in the presence of external vitamin B12. The sequence is that of Ethanolamine ammonia-lyase small subunit from Salmonella typhi.